Reading from the N-terminus, the 392-residue chain is GTPase Obg (392 aa).

Residues 1 to 159 (MKFVDEATIL…RDLQLELMLL (159 aa)) enclose the Obg domain. A disordered region spans residues 127-148 (NSRFKSSVNRSPRQKTMGTPGD). The span at 129–143 (RFKSSVNRSPRQKTM) shows a compositional bias: polar residues. The OBG-type G domain maps to 160-333 (ADVGMLGMPN…LCWDVMAFII (174 aa)). GTP is bound by residues 166-173 (GMPNAGKS), 191-195 (FTTLV), 213-216 (DIPG), 283-286 (NKID), and 314-316 (SAA). Mg(2+)-binding residues include Ser-173 and Thr-193. Positions 363–386 (EQEVEVEDDEEWDEDWDEDDEEGV) are enriched in acidic residues. A disordered region spans residues 363–392 (EQEVEVEDDEEWDEDWDEDDEEGVEFIYKR).

The protein belongs to the TRAFAC class OBG-HflX-like GTPase superfamily. OBG GTPase family. As to quaternary structure, monomer. Requires Mg(2+) as cofactor.

It localises to the cytoplasm. An essential GTPase which binds GTP, GDP and possibly (p)ppGpp with moderate affinity, with high nucleotide exchange rates and a fairly low GTP hydrolysis rate. Plays a role in control of the cell cycle, stress response, ribosome biogenesis and in those bacteria that undergo differentiation, in morphogenesis control. The sequence is that of GTPase Obg from Enterobacter sp. (strain 638).